The chain runs to 7094 residues: Replicase polyprotein 1ab (7094 aa).

The CoV Nsp1 globular domain maps to 54 to 196 (PENHVMVDCR…PWVMYLRKCG (143 aa)). A BetaCoV Nsp1 C-terminal domain is found at 216–246 (FKVEDAYDLVHDEPKGKFSKKAYALIRGYRG). The region spanning 250–519 (LLYVDQYGCD…LICKALYLDY (270 aa)) is the CoV Nsp2 N-terminal domain. Zn(2+) contacts are provided by C392, C397, C413, and C416. Residues 392–416 (CEQDLCDFKGWVPGNMIDGFACTTC) form a C4 region. One can recognise a CoV Nsp2 middle domain in the interval 524-713 (CGNLHQRELL…AQAFRSVAKV (190 aa)). The 119-residue stretch at 733-851 (RRRICLSGSK…LDQAWRVPCA (119 aa)) folds into the CoV Nsp2 C-terminal domain. One can recognise a Ubiquitin-like 1 domain in the interval 853–966 (RRVTFKEQPT…LYCAFTAPED (114 aa)). The Peptidase C16 1 domain occupies 1036–1274 (DLESVIQDYE…IAQLYGSCIT (239 aa)). The For PL1-PRO activity role is filled by C1074. Zn(2+) is bound by residues C1151, C1154, C1177, and C1179. The C4-type 1 zinc-finger motif lies at 1151–1179 (CIKCDLALKLKGLDAMFFYGDVVSHVCKC). Active-site for PL1-PRO activity residues include H1225 and D1236. One can recognise a Macro domain in the interval 1275–1435 (PNVCFVKGDI…LISKCQITAV (161 aa)). The DPUP domain maps to 1491-1563 (DDARTFVQSN…VAQIKALFLD (73 aa)). The Ubiquitin-like 2 domain occupies 1562–1617 (LDKVDILLTVDGVNFTNRFVPVGESFGKSLGNVFCDGVNVTKHKCDINYKGKVFFQ). A Peptidase C16 2 domain is found at 1631–1892 (SSFNFDQKEL…KIEYNPDLSQ (262 aa)). The active-site For PL2-PRO activity is C1671. C1749, C1751, C1783, and C1785 together coordinate Zn(2+). The C4-type 2 zinc-finger motif lies at 1749–1785 (CKCGVKQEQRTGVDAVMHFGTLSREDLEIGYTVDCSC). Residues H1828 and D1842 each act as for PL2-PRO activity in the active site. One can recognise a Nucleic acid-binding domain in the interval 1906 to 2007 (IKAQFKTFEK…TYFNRPLLVD (102 aa)). Residues 2020–2169 (DDGGDISESD…ADNKVIYTTE (150 aa)) form the G2M domain. 3 helical membrane passes run 2138 to 2158 (ISACFNFIKWLFVLLFGWIKI), 2199 to 2219 (ACIIATIFLLWFNFIYANVIF), and 2227 to 2247 (IGFLPTFVGKIAQWIKSTFSL). The interval 2138–2385 (ISACFNFIKW…ASFIKLFILF (248 aa)) is HD1. Residues 2235–2296 (GKIAQWIKST…AIDVVQYEAD (62 aa)) enclose the 3Ecto domain. Disulfide bonds link C2251/C2275 and C2266/C2272. 3 consecutive transmembrane segments (helical) span residues 2313 to 2333 (LIVSYALYTAWFYPLFALISI), 2343 to 2363 (LFMLSTLHWSVRLLVSLANML), and 2365 to 2385 (AHVFMRFYIIIASFIKLFILF). Residues 2383–2473 (ILFRHVAYGC…ELKRPIQPTD (91 aa)) form a Y1 region. The CoV Nsp3 Y domain maps to 2383–2750 (ILFRHVAYGC…LTTPFSLKGG (368 aa)). H2387, C2392, C2397, C2400, C2433, H2436, C2440, and C2443 together coordinate Zn(2+). Residues 2387–2400 (HVAYGCSKPGCLFC) are ZF1. A ZF2 region spans residues 2433 to 2443 (CSKHQWNCIDC). The segment at 2474-2566 (VAYHTVTDVK…MVDKNLITTA (93 aa)) is Y2. Residues 2474–2750 (VAYHTVTDVK…LTTPFSLKGG (277 aa)) form a coV-Y region. The tract at residues 2567 to 2649 (NTGTSVTETM…DSVMSAVSAG (83 aa)) is Y3. The segment at 2650–2750 (LELTDESCNN…LTTPFSLKGG (101 aa)) is Y4. A run of 7 helical transmembrane segments spans residues 2752–2772 (VFSYFVYVCFLLSLVCFIGLW), 2824–2844 (STFGLSYYSNSMACPIVVAVV), 3009–3029 (VFDLIYQLFKGLAQPVDFLAL), 3031–3051 (ASSIAGAILAVIVVLVFYYLI), 3063–3083 (IVFVNVIVWCVNFMMLFVFQV), 3090–3110 (VYAICYFYATLYFPSEISVIM), and 3115–3135 (LVMYGTIMPLWFCLLYISVVV). Positions 2752–3135 (VFSYFVYVCF…FCLLYISVVV (384 aa)) are HD2. The 98-residue stretch at 3149–3246 (LGTSVRSDGT…TASVSTSFLQ (98 aa)) folds into the Nsp4C domain. A Peptidase C30 domain is found at 3247–3549 (SGIVKMVNPT…YQQLAGIKLQ (303 aa)). Residues H3287 and C3391 each act as for 3CL-PRO activity in the active site. Helical transmembrane passes span 3558–3578 (GIVCWIMASTFLFSCIITAFV), 3588–3608 (TNMLSITFCALCVISLAMLLV), 3614–3634 (YLTMYIIPVLFTLLYNNYLVV), 3657–3677 (TYTDEVIYGMLLLIGMVFVTL), 3684–3704 (LFSFIMFVGRVISVVSLWYMG), 3711–3731 (ILLMLASLFGTYTWTTALSMA), and 3755–3775 (IVLVCYLFIGYIISCYWGLFS). Positions 3558–3775 (GIVCWIMAST…IISCYWGLFS (218 aa)) are HD3. The 89-residue stretch at 3837–3925 (SKLTDVKCAN…DYAKDNTVLQ (89 aa)) folds into the RdRp Nsp7 cofactor domain. The 197-residue stretch at 3926-4122 (ALQSEFVNMA…HNEVSATVLQ (197 aa)) folds into the RdRp Nsp8 cofactor domain. In terms of domain architecture, Nsp9 ssRNA-binding spans 4123–4232 (NNELMPAKLK…GTISSTVRLQ (110 aa)). Positions 4233 to 4370 (AGTATEYASN…CVSTDTTVQS (138 aa)) constitute an ExoN/MTase coactivator domain. Zn(2+) contacts are provided by C4306, C4309, H4315, C4322, C4348, C4351, C4359, and C4361. Zinc fingers lie at residues 4306 to 4322 (CIYCRARVEHPDVDGLC) and 4348 to 4361 (CQVCGFWRDGSCSC). One can recognise a NiRAN domain in the interval 4375–4630 (FLNRVRGTSV…DCELYVNNAY (256 aa)). N4578 and D4587 together coordinate Mn(2+). The Nsp12 Interface domain maps to 4631–4729 (RLFDLVQYDF…MNMDVDTHRY (99 aa)). 5 residues coordinate Zn(2+): H4660, C4666, C4671, C4675, and C4852. The Nsp12 RNA-dependent RNA polymerase domain occupies 4730 to 5297 (RLSLKDLLLY…NMYLRSAVMQ (568 aa)). Residues 4732 to 4946 (SLKDLLLYAA…HQKCLKSIAA (215 aa)) are rdRp Fingers N-ter. The tract at residues 4947–4985 (TRGVPVVIGTTKFYGGWDDMLRRLIKDVDNPVLMGWDYP) is rdRp Palm N-ter. A RdRp catalytic domain is found at 4977–5139 (PVLMGWDYPK…CYNSDYASKG (163 aa)). The segment at 4986 to 5044 (KCDRAMPNILRIVSSLVLARKHEACCSQSDRFYRLANECAQVLSEIVMCGGCYYVKPGG) is rdRp Fingers C-ter. Zn(2+)-binding residues include H5007, C5010, and C5011. Residues 5045–5180 (TSSGDATTAF…NNGPHEFCSQ (136 aa)) are rdRp Palm C-ter. Residues S5124, D5125, and D5126 contribute to the active site. The segment at 5181–5297 (HTMLVKMDGD…NMYLRSAVMQ (117 aa)) is rdRp Thumb. The CV ZBD domain occupies 5298 to 5410 (SVGACVVCSS…DDFNRIASCK (113 aa)). The Zn(2+) site is built by C5302, C5305, C5313, C5316, C5323, C5326, H5330, H5336, C5347, C5352, C5369, and H5372. In terms of domain architecture, (+)RNA virus helicase ATP-binding spans 5553 to 5734 (SVLETFQNNV…MCCLGPDIFL (182 aa)). 5578-5585 (GPPGTGKS) lines the ATP pocket. Positions 5735–5904 (GTCYRCPKEI…VETRVQCSTN (170 aa)) constitute a (+)RNA virus helicase C-terminal domain. An ExoN domain is found at 5971-6186 (LFITKEEAVK…RCLAVYDCFC (216 aa)). Catalysis depends on residues D5989, E5991, and E6090. Residues C6106, C6109, C6125, H6128, H6156, C6160, and H6163 each contribute to the Zn(2+) site. Residues H6167 and D6172 contribute to the active site. C6178 contacts Zn(2+). Residues 6195–6421 (YPIISNELSI…NLWNTFTKLQ (227 aa)) enclose the N7-MTase domain. Residue 6230–6236 (DIGNPKA) coordinates S-adenosyl-L-methionine. Residues 6308–6322 (CNGGSLYVNKHAFHT) are gpppA-binding. Residues C6346, C6367, C6378, and H6381 each contribute to the Zn(2+) site. The Nsp15 N-terminal oligomerization domain occupies 6422-6482 (SLENVVYNLV…NVAVELFAKR (61 aa)). The region spanning 6483–6603 (SIRHHPELKL…FAVRKEGQDV (121 aa)) is the AV-Nsp11N/CoV-Nsp15M domain. One can recognise a NendoU domain in the interval 6653-6792 (TCRTDMEKDF…NDEKVMTFYP (140 aa)). Residues H6683, H6698, K6738, K6841, D6925, K6965, and E6998 contribute to the active site. A Nidovirus-type SAM-dependent 2'-O-MTase domain is found at 6797–7091 (ASDWKPGYSM…KEVFVGDSLV (295 aa)).

Belongs to the coronaviruses polyprotein 1ab family. In terms of assembly, interacts with host PHB and PHB2. As to quaternary structure, interacts with papain-like protease nsp3 and non-structural protein 6. Monomer. Homodimer. Only the homodimer shows catalytic activity. In terms of assembly, interacts with nsp8 and nsp12 to form the replication-transcription complex (RTC): nsp12, nsp7, two subunits of nsp8, and up to two subunits of nsp13. As to quaternary structure, interacts with nsp7, nsp13 and nsp12 to form the replication-transcription complex (RTC): nsp12, nsp7, two subunits of nsp8, and up to two subunits of nsp13. Interacts with nsp12. In terms of assembly, interacts with proofreading exoribonuclease nsp14 and 2'-O-methyltransferase nsp16; these interactions enhance nsp14 and nsp16 enzymatic activities. As to quaternary structure, interacts with nsp7 and nsp8 to form the replication-transcription complex (RTC): nsp12, nsp7, two subunits of nsp8, and up to two subunits of nsp13. Interacts with nsp9. Interacts with nsp8 to form the replication-transcription complex (RTC): nsp12, nsp7, two subunits of nsp8, and up to two subunits of nsp13. Requires Mn(2+) as cofactor. Mg(2+) is required as a cofactor. Specific enzymatic cleavages in vivo by its own proteases yield mature proteins. 3CL-PRO and PL-PRO proteinases are autocatalytically processed.

It is found in the host membrane. The protein resides in the host cytoplasm. Its subcellular location is the host perinuclear region. It localises to the host endoplasmic reticulum-Golgi intermediate compartment. It catalyses the reaction RNA(n) + a ribonucleoside 5'-triphosphate = RNA(n+1) + diphosphate. The enzyme catalyses ATP + H2O = ADP + phosphate + H(+). It carries out the reaction Thiol-dependent hydrolysis of ester, thioester, amide, peptide and isopeptide bonds formed by the C-terminal Gly of ubiquitin (a 76-residue protein attached to proteins as an intracellular targeting signal).. The catalysed reaction is a 5'-end (N(7)-methyl 5'-triphosphoguanosine)-ribonucleoside in mRNA + S-adenosyl-L-methionine = a 5'-end (N(7)-methyl 5'-triphosphoguanosine)-(2'-O-methyl-ribonucleoside) in mRNA + S-adenosyl-L-homocysteine + H(+). It catalyses the reaction uridylyl-uridylyl-ribonucleotide-RNA = a 3'-end uridylyl-2',3'-cyclophospho-uridine-RNA + a 5'-end dephospho-ribonucleoside-RNA. The enzyme catalyses a 5'-end diphospho-ribonucleoside in mRNA + GTP + H(+) = a 5'-end (5'-triphosphoguanosine)-ribonucleoside in mRNA + diphosphate. It carries out the reaction a 5'-end (5'-triphosphoguanosine)-ribonucleoside in mRNA + S-adenosyl-L-methionine = a 5'-end (N(7)-methyl 5'-triphosphoguanosine)-ribonucleoside in mRNA + S-adenosyl-L-homocysteine. The replicase polyprotein of coronaviruses is a multifunctional protein: it contains the activities necessary for the transcription of negative stranded RNA, leader RNA, subgenomic mRNAs and progeny virion RNA as well as proteinases responsible for the cleavage of the polyprotein into functional products. Its function is as follows. Inhibits host translation by interacting with the 40S ribosomal subunit. The nsp1-40S ribosome complex further induces an endonucleolytic cleavage near the 5'UTR of host mRNAs, targeting them for degradation. Viral mRNAs are not susceptible to nsp1-mediated endonucleolytic RNA cleavage thanks to the presence of a 5'-end leader sequence and are therefore protected from degradation. By suppressing host gene expression, nsp1 facilitates efficient viral gene expression in infected cells and evasion from host immune response. In terms of biological role, may play a role in the modulation of host cell survival signaling pathway by interacting with host PHB and PHB2. Indeed, these two proteins play a role in maintaining the functional integrity of the mitochondria and protecting cells from various stresses. Functionally, responsible for the cleavages located at the N-terminus of the replicase polyprotein. In addition, PL-PRO possesses a deubiquitinating/deISGylating activity and processes both 'Lys-48'- and 'Lys-63'-linked polyubiquitin chains from cellular substrates. Participates together with nsp4 in the assembly of virally-induced cytoplasmic double-membrane vesicles necessary for viral replication. Antagonizes innate immune induction of type I interferon by blocking the phosphorylation, dimerization and subsequent nuclear translocation of host IRF3. Also prevents host NF-kappa-B signaling. Participates in the assembly of virally-induced cytoplasmic double-membrane vesicles necessary for viral replication. Its function is as follows. Cleaves the C-terminus of replicase polyprotein at 11 sites. Recognizes substrates containing the core sequence [ILMVF]-Q-|-[SGACN]. Also able to bind an ADP-ribose-1''-phosphate (ADRP). In terms of biological role, plays a role in the initial induction of autophagosomes from host endoplasmic reticulum. Later, limits the expansion of these phagosomes that are no longer able to deliver viral components to lysosomes. Functionally, forms a hexadecamer with nsp8 (8 subunits of each) that may participate in viral replication by acting as a primase. Alternatively, may synthesize substantially longer products than oligonucleotide primers. Forms a hexadecamer with nsp7 (8 subunits of each) that may participate in viral replication by acting as a primase. Alternatively, may synthesize substantially longer products than oligonucleotide primers. Its function is as follows. Forms a primer, NSP9-pU, which is utilized by the polymerase for the initiation of RNA chains. Interacts with ribosome signal recognition particle RNA (SRP). Together with NSP8, suppress protein integration into the cell membrane, thereby disrupting host immune defenses. In terms of biological role, plays a pivotal role in viral transcription by stimulating both nsp14 3'-5' exoribonuclease and nsp16 2'-O-methyltransferase activities. Therefore plays an essential role in viral mRNAs cap methylation. Functionally, RNA-directed RNA polymerase that catalyzes the transcription of viral genomic and subgenomic RNAs. Acts in complex with nsp7 and nsp8 to transcribe both the minus and positive strands of genomic RNA. The kinase-like NiRAN domain of NSP12 attaches one or more nucleotides to the amino terminus of NSP9, forming a covalent RNA-protein intermediate that serves as transcription/replication primer. Subgenomic RNAs (sgRNAs) are formed by discontinuous transcription: The polymerase has the ability to pause at transcription-regulating sequences (TRS) and jump to the leader TRS, resulting in a major deletion. This creates a series of subgenomic RNAs that are replicated, transcribed and translated. In addition, Nsp12 is a subunit of the viral RNA capping enzyme that catalyzes the RNA guanylyltransferase reaction for genomic and sub-genomic RNAs. Subsequently, the NiRAN domain transfers RNA to GDP, and forms the core cap structure GpppA-RNA. Multi-functional protein with a zinc-binding domain in N-terminus displaying RNA and DNA duplex-unwinding activities with 5' to 3' polarity. Activity of helicase is dependent on magnesium. Its function is as follows. Plays a role in viral RNA synthesis through two distinct activities. The N7-guanine methyltransferase activity plays a role in the formation of the cap structure GpppA-RNA. The proofreading exoribonuclease reduces the sensitivity of the virus to RNA mutagens during replication. This activity acts on both ssRNA and dsRNA in a 3'-5' direction. In terms of biological role, plays a role in viral transcription/replication and prevents the simultaneous activation of host cell dsRNA sensors, such as MDA5/IFIH1, OAS, and PKR. Acts by degrading the 5'-polyuridines generated during replication of the poly(A) region of viral genomic and subgenomic RNAs. Catalyzes a two-step reaction in which a 2'3'-cyclic phosphate (2'3'-cP) is first generated by 2'-O transesterification, which is then hydrolyzed to a 3'-phosphate (3'-P). If not degraded, poly(U) RNA would hybridize with poly(A) RNA tails and activate host dsRNA sensors. Functionally, methyltransferase that mediates mRNA cap 2'-O-ribose methylation to the 5'-cap structure of viral mRNAs. N7-methyl guanosine cap is a prerequisite for binding of nsp16. Therefore plays an essential role in viral mRNAs cap methylation which is essential to evade immune system. This chain is Replicase polyprotein 1ab (rep), found in Bos taurus (Bovine).